Consider the following 221-residue polypeptide: Small ribosomal subunit protein uS3 (221 aa).

One can recognise a KH type-2 domain in the interval 39–108; that stretch reads IRKFVKKELF…NILINIVEVK (70 aa).

Belongs to the universal ribosomal protein uS3 family. Part of the 30S ribosomal subunit. Forms a tight complex with proteins S10 and S14.

Binds the lower part of the 30S subunit head. Binds mRNA in the 70S ribosome, positioning it for translation. The protein is Small ribosomal subunit protein uS3 of Clostridium botulinum (strain Alaska E43 / Type E3).